The primary structure comprises 808 residues: Homeobox-leucine zipper protein HDG1 (808 aa).

Positions 57-121 (LQTNGEMSRN…KRYHRHTPKQ (65 aa)) are disordered. The segment covering 79–90 (SRGEDVESRSES) has biased composition (basic and acidic residues). The span at 108–119 (LKKKKRYHRHTP) shows a compositional bias: basic residues. The homeobox DNA-binding region spans 110 to 169 (KKKRYHRHTPKQIQDLESVFKECAHPDEKQRLDLSRRLNLDPRQVKFWFQNRRTQMKTQI). Residues 158-233 (FQNRRTQMKT…SRLKDELDRV (76 aa)) adopt a coiled-coil conformation. One can recognise an START domain in the interval 310–541 (DFDQRSRYLD…LQRQCECLTI (232 aa)).

It belongs to the HD-ZIP homeobox family. Class IV subfamily. In terms of assembly, interacts with CFL1. Binds with BBM. In terms of tissue distribution, expressed in trichomes forming at the base of young leaves, in endodermal cell lines around emergent lateral roots and in the epidermal layer of the stamen filament.

It is found in the nucleus. Probable transcription factor. Promotes cuticle development probably by modulating the expression of the downstream genes BDG and FDH, possibly repressed in a CFL1-dependent manner. Involved, together with PDF2, in the regulation of flower organs development by promoting the expression of APETALA 3 (AP3) in the epidermis and internal cell layers of developing flowers. In opposition to BBM, seems to promote cell differentiation and giant cell identity via transcriptional repression of meristem and cell proliferation genes. This Arabidopsis thaliana (Mouse-ear cress) protein is Homeobox-leucine zipper protein HDG1.